The chain runs to 284 residues: MKACGFDIGLEHPFFLIAGPCVIESRELAFDTAGRLKEITSRLGIPFIYKSSFDKANRSSGKSFRGLGIDEGLKILADVRDQVGVPVLTDVHETEQVEPVAAVVDMLQTPAFLCRQTDFIRACAASLKPVNIKKGQFLAPHDMVQVAQKARDAAIEAGGDGSNILVCERGASFGYNNLVSDMRSLAIMRETGCPVVFDATHSVQLPGGQGTSSGGQREFVPVLARAAVAVGVSGLFMETHPNPACALSDGPNAVPLDLMPALLESLVELDRVTKRNGFVENQFI.

The protein belongs to the KdsA family.

It localises to the cytoplasm. The catalysed reaction is D-arabinose 5-phosphate + phosphoenolpyruvate + H2O = 3-deoxy-alpha-D-manno-2-octulosonate-8-phosphate + phosphate. It participates in carbohydrate biosynthesis; 3-deoxy-D-manno-octulosonate biosynthesis; 3-deoxy-D-manno-octulosonate from D-ribulose 5-phosphate: step 2/3. The protein operates within bacterial outer membrane biogenesis; lipopolysaccharide biosynthesis. The polypeptide is 2-dehydro-3-deoxyphosphooctonate aldolase (Bordetella petrii (strain ATCC BAA-461 / DSM 12804 / CCUG 43448)).